We begin with the raw amino-acid sequence, 248 residues long: ATP synthase subunit a, chloroplastic (248 aa).

Transmembrane regions (helical) follow at residues Gln38 to Val58, Val96 to Leu116, Ile135 to Ala155, Leu200 to Leu220, and Gly221 to Gly241.

The protein belongs to the ATPase A chain family. In terms of assembly, F-type ATPases have 2 components, CF(1) - the catalytic core - and CF(0) - the membrane proton channel. CF(1) has five subunits: alpha(3), beta(3), gamma(1), delta(1), epsilon(1). CF(0) has four main subunits: a, b, b' and c.

It localises to the plastid. The protein resides in the chloroplast thylakoid membrane. Its function is as follows. Key component of the proton channel; it plays a direct role in the translocation of protons across the membrane. This Cycas taitungensis (Prince sago) protein is ATP synthase subunit a, chloroplastic.